Reading from the N-terminus, the 300-residue chain is Small ribosomal subunit biogenesis GTPase RsgA (300 aa).

The CP-type G domain occupies 69 to 231 (RSDEMRVKQF…LIDSPGFQAF (163 aa)). Residues 119-122 (NKID) and 172-180 (GQSGMGKST) contribute to the GTP site. The Zn(2+) site is built by C255, C260, H262, and C268.

It belongs to the TRAFAC class YlqF/YawG GTPase family. RsgA subfamily. As to quaternary structure, monomer. Associates with 30S ribosomal subunit, binds 16S rRNA. Zn(2+) serves as cofactor.

It is found in the cytoplasm. In terms of biological role, one of several proteins that assist in the late maturation steps of the functional core of the 30S ribosomal subunit. Helps release RbfA from mature subunits. May play a role in the assembly of ribosomal proteins into the subunit. Circularly permuted GTPase that catalyzes slow GTP hydrolysis, GTPase activity is stimulated by the 30S ribosomal subunit. The chain is Small ribosomal subunit biogenesis GTPase RsgA from Bordetella bronchiseptica (strain ATCC BAA-588 / NCTC 13252 / RB50) (Alcaligenes bronchisepticus).